The following is a 361-amino-acid chain: Chorismate synthase (361 aa).

NADP(+) is bound by residues Arg-48 and Arg-54. FMN contacts are provided by residues 131–133 (RSS), 243–244 (NA), Gly-287, 302–306 (KPTSS), and Arg-328.

It belongs to the chorismate synthase family. Homotetramer. The cofactor is FMNH2.

The catalysed reaction is 5-O-(1-carboxyvinyl)-3-phosphoshikimate = chorismate + phosphate. Its pathway is metabolic intermediate biosynthesis; chorismate biosynthesis; chorismate from D-erythrose 4-phosphate and phosphoenolpyruvate: step 7/7. In terms of biological role, catalyzes the anti-1,4-elimination of the C-3 phosphate and the C-6 proR hydrogen from 5-enolpyruvylshikimate-3-phosphate (EPSP) to yield chorismate, which is the branch point compound that serves as the starting substrate for the three terminal pathways of aromatic amino acid biosynthesis. This reaction introduces a second double bond into the aromatic ring system. The chain is Chorismate synthase from Rhodopseudomonas palustris (strain BisA53).